The sequence spans 145 residues: Holo-[acyl-carrier-protein] synthase (145 aa).

Mg(2+) is bound by residues aspartate 9 and glutamate 59.

This sequence belongs to the P-Pant transferase superfamily. AcpS family. It depends on Mg(2+) as a cofactor.

The protein resides in the cytoplasm. The catalysed reaction is apo-[ACP] + CoA = holo-[ACP] + adenosine 3',5'-bisphosphate + H(+). Its function is as follows. Transfers the 4'-phosphopantetheine moiety from coenzyme A to a Ser of acyl-carrier-protein. This chain is Holo-[acyl-carrier-protein] synthase, found in Nocardia farcinica (strain IFM 10152).